We begin with the raw amino-acid sequence, 357 residues long: Homoserine O-acetyltransferase (357 aa).

The AB hydrolase-1 domain maps to 51-340 (NVIVICHALT…EPYGHDAFLI (290 aa)). Ser147 (nucleophile) is an active-site residue. A substrate-binding site is contributed by Arg216. Active-site residues include Asp306 and His335. Asp336 is a binding site for substrate.

The protein belongs to the AB hydrolase superfamily. MetX family. Homodimer.

Its subcellular location is the cytoplasm. The catalysed reaction is L-homoserine + acetyl-CoA = O-acetyl-L-homoserine + CoA. It participates in amino-acid biosynthesis; L-methionine biosynthesis via de novo pathway; O-acetyl-L-homoserine from L-homoserine: step 1/1. In terms of biological role, transfers an acetyl group from acetyl-CoA to L-homoserine, forming acetyl-L-homoserine. This chain is Homoserine O-acetyltransferase, found in Chlorobium chlorochromatii (strain CaD3).